The following is a 167-amino-acid chain: MKSLTLLTICAVLSVSLSMNDLALDVVLDPAPDPATEPAPAADSSASSSASSSSSSASDSSASASDSSDSDSSSASSSSSSSESASAEVTTEDPAAATEPEVVIMKRDLASVLLRRKRAAGQAAAAFTLTQVESLSEVCELNLACEHMAETAGIVAAYTAYYGPPPF.

The N-terminal stretch at 1–18 (MKSLTLLTICAVLSVSLS) is a signal peptide. Positions 19 to 118 (MNDLALDVVL…LASVLLRRKR (100 aa)) are excised as a propeptide. Residues 28–99 (LDPAPDPATE…TTEDPAAATE (72 aa)) are disordered. Residues 38–87 (PAPAADSSASSSASSSSSSASDSSASASDSSDSDSSSASSSSSSSESASA) show a composition bias toward low complexity. One can recognise a Gla domain in the interval 131–163 (QVESLSEVCELNLACEHMAETAGIVAAYTAYYG). Residues Glu133, Glu137, and Glu140 each contribute to the Ca(2+) site. 3 positions are modified to 4-carboxyglutamate: Glu133, Glu137, and Glu140. A disulfide bond links Cys139 and Cys145.

This sequence belongs to the osteocalcin/matrix Gla protein family. Post-translationally, gamma-carboxyglutamate residues are formed by vitamin K dependent carboxylation. These residues are essential for the binding of calcium.

It is found in the secreted. In terms of biological role, binds strongly to apatite and calcium. The polypeptide is Osteocalcin 2a (Oncorhynchus mykiss (Rainbow trout)).